A 217-amino-acid chain; its full sequence is Somatotropin (217 aa).

The first 27 residues, 1-27 (MMAAGPRASLLLAFALLCLPWTQEVGA), serve as a signal peptide directing secretion. H46 contributes to the Zn(2+) binding site. The cysteines at positions 79 and 190 are disulfide-linked. S132 is modified (phosphoserine). E199 serves as a coordination point for Zn(2+). An intrachain disulfide couples C207 to C215.

It belongs to the somatotropin/prolactin family.

The protein localises to the secreted. Its function is as follows. Plays an important role in growth control. Its major role in stimulating body growth is to stimulate the liver and other tissues to secrete IGF1. It stimulates both the differentiation and proliferation of myoblasts. It also stimulates amino acid uptake and protein synthesis in muscle and other tissues. This is Somatotropin (GH1) from Cervus elaphus (Red deer).